Here is a 223-residue protein sequence, read N- to C-terminus: MTSSATSPTNGVDKNKNEEMVATPANCPYQLFNQEVVWNGKWIQTRQVGFKTHTGQVGVWQSVHRNTKPVEASADGVSIIARVRKQGKLYIVLVKQYRIPCGKLCLELPAGLIDAGETAQQAAIRELKEETGYVSGKVVMESKLCFLDPGLTDDSQCLVVVDVDGDAPENQNPVQVLDSTESIEVLLVEQSALMAYVTNLDSSSIVVESTLLAYAMGIQFATI.

The Nudix hydrolase domain maps to 72–213; the sequence is ASADGVSIIA…SIVVESTLLA (142 aa). The short motif at 111–132 is the Nudix box element; the sequence is GLIDAGETAQQAAIRELKEETG. Mg(2+)-binding residues include Glu126 and Glu130.

Belongs to the Nudix hydrolase family. The cofactor is Mg(2+). Mn(2+) serves as cofactor.

Its function is as follows. Probably mediates the hydrolysis of some nucleoside diphosphate derivatives. This Caenorhabditis elegans protein is Putative nudix hydrolase 2 (ndx-2).